A 99-amino-acid polypeptide reads, in one-letter code: uncharacterized protein (99 aa).

This is an uncharacterized protein from Saccharomyces cerevisiae (strain ATCC 204508 / S288c) (Baker's yeast).